Here is a 622-residue protein sequence, read N- to C-terminus: Matrilin-4 (622 aa).

The N-terminal stretch at 1 to 18 (MRGLLCWPVLLLLLQPWE) is a signal peptide. One can recognise a VWFA 1 domain in the interval 34-213 (DLVFVIDSSR…EFGLQFQSRL (180 aa)). Asparagine 69 carries N-linked (GlcNAc...) asparagine glycosylation. The EGF-like 1; incomplete domain occupies 215 to 255 (GKDQCAEGGHGCQHQCVNAWAMFHCTCNPGYKLAADNKSCL). Disulfide bonds link cysteine 219–cysteine 230, cysteine 226–cysteine 239, cysteine 241–cysteine 254, cysteine 260–cysteine 271, cysteine 267–cysteine 280, cysteine 282–cysteine 295, cysteine 301–cysteine 312, cysteine 308–cysteine 321, cysteine 323–cysteine 336, cysteine 342–cysteine 353, cysteine 349–cysteine 362, and cysteine 364–cysteine 377. A glycan (N-linked (GlcNAc...) asparagine) is linked at asparagine 251. EGF-like domains are found at residues 256-292 (AIDL…QQDQ), 297-337 (AIDY…RSCQ), and 342-377 (CNGV…GKSC). Asparagine 305 is a glycosylation site (N-linked (GlcNAc...) asparagine). Residues 386–561 (DLVLLVDGSK…GTMTHLLENL (176 aa)) enclose the VWFA 2 domain. Residues 591-622 (GRTLGALESLTLNLAQLTARLEDLENQLANQK) are a coiled coil.

In terms of assembly, interacts with COMP. As to expression, embryonic kidney, lung and placenta.

It is found in the secreted. In terms of biological role, major component of the extracellular matrix of cartilage. The polypeptide is Matrilin-4 (MATN4) (Homo sapiens (Human)).